Reading from the N-terminus, the 984-residue chain is Respiratory nitrate reductase subunit alpha (984 aa).

A disordered region spans residues 1–43 (MSRNDASQLDDGETTAESPPDDQANDAPEVGDPPGDPVDADSG). The span at 8 to 24 (QLDDGETTAESPPDDQA) shows a compositional bias: acidic residues. Positions 103-167 (DSVSRSTHSV…CYTDYVNADQ (65 aa)) constitute a 4Fe-4S Mo/W bis-MGD-type domain. [4Fe-4S] cluster contacts are provided by His-110, Cys-114, Cys-118, and Cys-153. Residue Asp-249 participates in Mo-bis(molybdopterin guanine dinucleotide) binding.

The protein belongs to the prokaryotic molybdopterin-containing oxidoreductase family. In terms of assembly, probable multiprotein complex; a catalytic heterodimer of an alpha and beta chain is proposed to associate with additional subunits involved in membrane attachment and electron transfer. The cofactor is [4Fe-4S] cluster. Mo-bis(molybdopterin guanine dinucleotide) serves as cofactor. Post-translationally, exported by the Tat system.

The protein resides in the cell membrane. It catalyses the reaction nitrate + a quinol = a quinone + nitrite + H2O. Its activity is regulated as follows. Inhibited by cyanide, azide and antimycin A. Enzyme stability is not dependent on salt concentration. Functionally, the respiratory membrane-bound nitrate reductase enzyme complex plays a role in generation of metabolic energy by using nitrate as a terminal electron acceptor during anaerobic conditions. The alpha chain is the actual site of nitrate reduction. In Haloferax mediterranei (strain ATCC 33500 / DSM 1411 / JCM 8866 / NBRC 14739 / NCIMB 2177 / R-4) (Halobacterium mediterranei), this protein is Respiratory nitrate reductase subunit alpha (narG).